Here is a 269-residue protein sequence, read N- to C-terminus: Signal recognition particle receptor subunit beta (269 aa).

The chain crosses the membrane as a helical span at residues 35 to 55 (LLSVAVAVLAVLLTLVFWKFI). GTP-binding positions include 69–77 (GLCDSGKTL) and 90–93 (TQTS). Position 110 is a phosphoserine (S110). Residue G118 coordinates GTP. T212 carries the post-translational modification Phosphothreonine. GTP is bound at residue A246.

The protein belongs to the SRP receptor beta subunit family. In terms of assembly, heterodimer with SRPRA.

It is found in the endoplasmic reticulum membrane. In terms of biological role, component of the signal recognition particle (SRP) complex receptor (SR). Ensures, in conjunction with the SRP complex, the correct targeting of the nascent secretory proteins to the endoplasmic reticulum membrane system. May mediate the membrane association of SR. This Rattus norvegicus (Rat) protein is Signal recognition particle receptor subunit beta (Srprb).